Consider the following 232-residue polypeptide: 5'-methylthioadenosine/S-adenosylhomocysteine nucleosidase (232 aa).

Glutamate 12 (proton acceptor) is an active-site residue. Substrate-binding positions include glycine 78, isoleucine 152, and 173-174 (ME). The active-site Proton donor is the aspartate 197.

Belongs to the PNP/UDP phosphorylase family. MtnN subfamily. Homodimer.

It carries out the reaction S-adenosyl-L-homocysteine + H2O = S-(5-deoxy-D-ribos-5-yl)-L-homocysteine + adenine. It catalyses the reaction S-methyl-5'-thioadenosine + H2O = 5-(methylsulfanyl)-D-ribose + adenine. The catalysed reaction is 5'-deoxyadenosine + H2O = 5-deoxy-D-ribose + adenine. It functions in the pathway amino-acid biosynthesis; L-methionine biosynthesis via salvage pathway; S-methyl-5-thio-alpha-D-ribose 1-phosphate from S-methyl-5'-thioadenosine (hydrolase route): step 1/2. Its function is as follows. Catalyzes the irreversible cleavage of the glycosidic bond in both 5'-methylthioadenosine (MTA) and S-adenosylhomocysteine (SAH/AdoHcy) to adenine and the corresponding thioribose, 5'-methylthioribose and S-ribosylhomocysteine, respectively. Also cleaves 5'-deoxyadenosine, a toxic by-product of radical S-adenosylmethionine (SAM) enzymes, into 5-deoxyribose and adenine. Thus, is required for in vivo function of the radical SAM enzymes biotin synthase and lipoic acid synthase, that are inhibited by 5'-deoxyadenosine accumulation. In Cronobacter sakazakii (strain ATCC BAA-894) (Enterobacter sakazakii), this protein is 5'-methylthioadenosine/S-adenosylhomocysteine nucleosidase.